The primary structure comprises 282 residues: Aldo-keto reductase MUL_1987 (282 aa).

Tyr-57 (proton donor) is an active-site residue. Leu-197, Ile-235, Ser-238, Thr-246, Asn-247, and Arg-273 together coordinate NADPH.

This sequence belongs to the aldo/keto reductase family.

This is Aldo-keto reductase MUL_1987 from Mycobacterium ulcerans (strain Agy99).